The following is a 365-amino-acid chain: Aminomethyltransferase (365 aa).

It belongs to the GcvT family. As to quaternary structure, the glycine cleavage system is composed of four proteins: P, T, L and H.

It carries out the reaction N(6)-[(R)-S(8)-aminomethyldihydrolipoyl]-L-lysyl-[protein] + (6S)-5,6,7,8-tetrahydrofolate = N(6)-[(R)-dihydrolipoyl]-L-lysyl-[protein] + (6R)-5,10-methylene-5,6,7,8-tetrahydrofolate + NH4(+). Its function is as follows. The glycine cleavage system catalyzes the degradation of glycine. This is Aminomethyltransferase from Chlorobaculum parvum (strain DSM 263 / NCIMB 8327) (Chlorobium vibrioforme subsp. thiosulfatophilum).